The sequence spans 89 residues: Putative regulatory protein CYA_2696 (89 aa).

Belongs to the RemA family.

The polypeptide is Putative regulatory protein CYA_2696 (Synechococcus sp. (strain JA-3-3Ab) (Cyanobacteria bacterium Yellowstone A-Prime)).